A 446-amino-acid polypeptide reads, in one-letter code: Actin-related protein 6 (446 aa).

Over residues 1–11 (MTGRGGAKKSR) the composition is skewed to basic residues. The disordered stretch occupies residues 1-24 (MTGRGGAKKSRAAGPAPPTTTLVL).

Belongs to the actin family. ARP6 subfamily. As to quaternary structure, component of the SWR1 chromatin remodeling complex.

The protein resides in the cytoplasm. It is found in the cytoskeleton. It localises to the nucleus. Its function is as follows. Component of the SWR1 complex which mediates the ATP-dependent exchange of histone H2A for the H2A variant H2A.Z leading to transcriptional regulation of selected genes by chromatin remodeling. Involved in chromosome stability. The sequence is that of Actin-related protein 6 (arp-6) from Neurospora crassa (strain ATCC 24698 / 74-OR23-1A / CBS 708.71 / DSM 1257 / FGSC 987).